A 152-amino-acid chain; its full sequence is Deoxyuridine 5'-triphosphate nucleotidohydrolase (152 aa).

Residues 71–73, asparagine 84, 88–90, and methionine 98 each bind substrate; these read RSG and LID.

It belongs to the dUTPase family. Mg(2+) serves as cofactor.

It catalyses the reaction dUTP + H2O = dUMP + diphosphate + H(+). It participates in pyrimidine metabolism; dUMP biosynthesis; dUMP from dCTP (dUTP route): step 2/2. This enzyme is involved in nucleotide metabolism: it produces dUMP, the immediate precursor of thymidine nucleotides and it decreases the intracellular concentration of dUTP so that uracil cannot be incorporated into DNA. The protein is Deoxyuridine 5'-triphosphate nucleotidohydrolase of Cronobacter sakazakii (strain ATCC BAA-894) (Enterobacter sakazakii).